The chain runs to 155 residues: Small ribosomal subunit protein bS6 (155 aa).

The span at 115–137 (EADAAKAEADAARVEAEAKKAET) shows a compositional bias: basic and acidic residues. Positions 115–155 (EADAAKAEADAARVEAEAKKAETDETDETVDAETPENEEEN) are disordered. Acidic residues predominate over residues 138-155 (DETDETVDAETPENEEEN).

Belongs to the bacterial ribosomal protein bS6 family.

Functionally, binds together with bS18 to 16S ribosomal RNA. The chain is Small ribosomal subunit protein bS6 from Desulforapulum autotrophicum (strain ATCC 43914 / DSM 3382 / VKM B-1955 / HRM2) (Desulfobacterium autotrophicum).